The following is a 345-amino-acid chain: Twinfilin (345 aa).

ADF-H domains are found at residues 4–139 and 177–312; these read QTGI…KHKR and GISC…DELH. The disordered stretch occupies residues 320-345; it reads PAFAKPKGPPNRGAKRLTRPSNEDQV.

Belongs to the actin-binding proteins ADF family. Twinfilin subfamily. In terms of assembly, interacts with G-actin; ADP-actin form.

It is found in the cytoplasm. The protein localises to the cytoskeleton. It localises to the cell cortex. Its function is as follows. Actin-binding protein involved in motile and morphological processes. Inhibits actin polymerization, likely by sequestering G-actin. In Drosophila pseudoobscura pseudoobscura (Fruit fly), this protein is Twinfilin (twf).